The sequence spans 141 residues: Hemoglobin subunit alpha-A (141 aa).

A Globin domain is found at 1–141 (VLSGTDKTNV…VGAVLTAKYR (141 aa)). H58 lines the O2 pocket. A heme b-binding site is contributed by H87.

It belongs to the globin family. Heterotetramer of two alpha chains and two beta chains. In terms of tissue distribution, red blood cells.

Involved in oxygen transport from the lung to the various peripheral tissues. The sequence is that of Hemoglobin subunit alpha-A (HBAA) from Struthio camelus (Common ostrich).